The primary structure comprises 313 residues: Porphobilinogen deaminase (313 aa).

Cysteine 242 carries the S-(dipyrrolylmethanemethyl)cysteine modification.

It belongs to the HMBS family. As to quaternary structure, monomer. Requires dipyrromethane as cofactor.

The enzyme catalyses 4 porphobilinogen + H2O = hydroxymethylbilane + 4 NH4(+). It participates in porphyrin-containing compound metabolism; protoporphyrin-IX biosynthesis; coproporphyrinogen-III from 5-aminolevulinate: step 2/4. In terms of biological role, tetrapolymerization of the monopyrrole PBG into the hydroxymethylbilane pre-uroporphyrinogen in several discrete steps. The sequence is that of Porphobilinogen deaminase from Yersinia enterocolitica serotype O:8 / biotype 1B (strain NCTC 13174 / 8081).